The sequence spans 82 residues: Defensin-like protein 22 (82 aa).

The signal sequence occupies residues 1 to 24; it reads MAGLKVFSFALLLILTFSLIDVEG. Intrachain disulfides connect C34/C82, C44/C69, C53/C78, and C57/C80.

Belongs to the DEFL family.

Its subcellular location is the secreted. The polypeptide is Defensin-like protein 22 (Arabidopsis thaliana (Mouse-ear cress)).